The primary structure comprises 309 residues: Aspartate carbamoyltransferase catalytic subunit (309 aa).

The carbamoyl phosphate site is built by Arg-54 and Thr-55. L-aspartate is bound at residue Lys-82. 3 residues coordinate carbamoyl phosphate: Arg-104, His-132, and Gln-135. 2 residues coordinate L-aspartate: Arg-165 and Arg-219. Carbamoyl phosphate-binding residues include Gly-260 and Pro-261.

This sequence belongs to the aspartate/ornithine carbamoyltransferase superfamily. ATCase family. In terms of assembly, heterododecamer (2C3:3R2) of six catalytic PyrB chains organized as two trimers (C3), and six regulatory PyrI chains organized as three dimers (R2).

It catalyses the reaction carbamoyl phosphate + L-aspartate = N-carbamoyl-L-aspartate + phosphate + H(+). It functions in the pathway pyrimidine metabolism; UMP biosynthesis via de novo pathway; (S)-dihydroorotate from bicarbonate: step 2/3. In terms of biological role, catalyzes the condensation of carbamoyl phosphate and aspartate to form carbamoyl aspartate and inorganic phosphate, the committed step in the de novo pyrimidine nucleotide biosynthesis pathway. The chain is Aspartate carbamoyltransferase catalytic subunit from Parafrankia sp. (strain EAN1pec).